We begin with the raw amino-acid sequence, 339 residues long: NADH-quinone oxidoreductase subunit H (339 aa).

9 helical membrane passes run 9–29 (IFPLIIIALKVVAITTPLILC), 50–70 (PNVVGPFGLLQPIADAVKLLF), 82–102 (ILFILAPMITFILSLIGWAVI), 115–135 (VGVLYILAISSLSVYGIIIAG), 161–181 (MGLVIITVLLTTGTLNLSEII), 187–207 (MPWWIDLMLLPMGVVFFISVL), 235–255 (MGFALFFLGEYANMILVSAMT), 275–295 (IPGFFWFVFKVGFLLFCFLWI), and 311–331 (GWKVFLPLTLFWVVLVSSVLV).

The protein belongs to the complex I subunit 1 family. NDH-1 is composed of 14 different subunits. Subunits NuoA, H, J, K, L, M, N constitute the membrane sector of the complex.

It is found in the cell inner membrane. The enzyme catalyses a quinone + NADH + 5 H(+)(in) = a quinol + NAD(+) + 4 H(+)(out). In terms of biological role, NDH-1 shuttles electrons from NADH, via FMN and iron-sulfur (Fe-S) centers, to quinones in the respiratory chain. The immediate electron acceptor for the enzyme in this species is believed to be ubiquinone. Couples the redox reaction to proton translocation (for every two electrons transferred, four hydrogen ions are translocated across the cytoplasmic membrane), and thus conserves the redox energy in a proton gradient. This subunit may bind ubiquinone. This chain is NADH-quinone oxidoreductase subunit H, found in Rickettsia peacockii (strain Rustic).